The sequence spans 367 residues: D-alanine--D-alanine ligase (367 aa).

Residues 141–346 form the ATP-grasp domain; the sequence is KNLFAQAGLR…YPELIERLIA (206 aa). 174 to 229 contacts ATP; it reads ERELGYPCFVKPANAGSSVGISKCKQRGDLKAAFIEAFQYDRKIIIEEAIVGREIE. D300, E313, and N315 together coordinate Mg(2+).

Belongs to the D-alanine--D-alanine ligase family. Requires Mg(2+) as cofactor. It depends on Mn(2+) as a cofactor.

The protein localises to the cytoplasm. The catalysed reaction is 2 D-alanine + ATP = D-alanyl-D-alanine + ADP + phosphate + H(+). Its pathway is cell wall biogenesis; peptidoglycan biosynthesis. Its function is as follows. Cell wall formation. The polypeptide is D-alanine--D-alanine ligase (Geobacillus kaustophilus (strain HTA426)).